We begin with the raw amino-acid sequence, 406 residues long: NADH-quinone oxidoreductase subunit D (406 aa).

The protein belongs to the complex I 49 kDa subunit family. As to quaternary structure, NDH-1 is composed of 14 different subunits. Subunits NuoB, C, D, E, F, and G constitute the peripheral sector of the complex.

The protein resides in the cell inner membrane. The enzyme catalyses a quinone + NADH + 5 H(+)(in) = a quinol + NAD(+) + 4 H(+)(out). In terms of biological role, NDH-1 shuttles electrons from NADH, via FMN and iron-sulfur (Fe-S) centers, to quinones in the respiratory chain. The immediate electron acceptor for the enzyme in this species is believed to be ubiquinone. Couples the redox reaction to proton translocation (for every two electrons transferred, four hydrogen ions are translocated across the cytoplasmic membrane), and thus conserves the redox energy in a proton gradient. In Leptospira biflexa serovar Patoc (strain Patoc 1 / Ames), this protein is NADH-quinone oxidoreductase subunit D.